We begin with the raw amino-acid sequence, 249 residues long: 2,3-bisphosphoglycerate-dependent phosphoglycerate mutase (249 aa).

Substrate contacts are provided by residues 8-15 (RHGESTWN), 21-22 (TG), Arg-60, 87-90 (ERHY), Lys-98, 114-115 (RR), and 183-184 (GN). The active-site Tele-phosphohistidine intermediate is the His-9. Glu-87 (proton donor/acceptor) is an active-site residue.

Belongs to the phosphoglycerate mutase family. BPG-dependent PGAM subfamily. As to quaternary structure, homodimer.

The catalysed reaction is (2R)-2-phosphoglycerate = (2R)-3-phosphoglycerate. It functions in the pathway carbohydrate degradation; glycolysis; pyruvate from D-glyceraldehyde 3-phosphate: step 3/5. Catalyzes the interconversion of 2-phosphoglycerate and 3-phosphoglycerate. The sequence is that of 2,3-bisphosphoglycerate-dependent phosphoglycerate mutase from Aromatoleum aromaticum (strain DSM 19018 / LMG 30748 / EbN1) (Azoarcus sp. (strain EbN1)).